Consider the following 308-residue polypeptide: Thiohydrolase (308 aa).

The protein belongs to the polyketide transferase af380 family.

The protein operates within mycotoxin biosynthesis. Thiohydrolase; part of the gene cluster that mediates the biosynthesis of brefeldin A (BFA), a protein transport inhibitor that shows antiviral, antifungal, and antitumor properties. The proposed biosynthesis of BFA involves formation of an acyclic polyketide chain that is differentially tailored throughout the backbone. The highly reducing polyketide synthase Bref-PKS is proposed to synthesize the precisely reduced octaketide precursor, which could then be directly offloaded by the thiohydrolase enzyme Bref-TH followed by a cytochrome P450 monooxygenase-mediated formation of the cyclopentane ring and macrocyclization to afford 7-deoxy BFA. Alternatively, the first ring annulation can also occur on the ACP-tethered intermediate before the thiohydrolase release and lactonization. The C7-hydroxylation by another cytochrome P450 monooxygenase is believed to be the final step in the process to obtain the final structure of BFA. In addition to the HRPKS Bref-PKS and the thiohydrolase Bref-TH, the brefeldin A biosynthesis cluster contains 4 cytochrome p450 monooxygenases (called orf3 to orf6), as well a the probable cluster-specific transcription regulator orf8. The sequence is that of Thiohydrolase from Eupenicillium brefeldianum (Penicillium brefeldianum).